The chain runs to 423 residues: Large ribosomal subunit protein mL37 (423 aa).

A mitochondrion-targeting transit peptide spans 1–29; it reads MALASGPALRALAGSGRLGLGGYGTPKRG.

It belongs to the mitochondrion-specific ribosomal protein mL37 family. In terms of assembly, component of the mitochondrial ribosome large subunit (39S) which comprises a 16S rRNA and about 50 distinct proteins.

The protein localises to the mitochondrion. This chain is Large ribosomal subunit protein mL37 (Mrpl37), found in Mus musculus (Mouse).